Here is a 385-residue protein sequence, read N- to C-terminus: MVRFISFTSPIAALLLLSFGVKHASTASTNTCIVANSDSDDAITIAEAFEKCKTGGTVVFPKDSSYQLNSIVTTSDLKNVNINFAGTIHLPAREESYRNGDYYIQIKGTHIKMYGGGTINGHGQAWYDALDHTAPSVLRIAANDSIIGGFTIINSPRAHLNVTNSTNLVLHDFTLHTVSNNSYLPKNTDALDLYHSSGITFRDSMLTIGDDCVAIKEDVEKVIVSNVTCRGGHGYSIGSLGIGGRKDYVKHVNFRNSTCIDCENGVRVKTWAGGKGIVEDINYNDIILQNVDNPILVTTHYCDPNVIEYCNGNDDNSLNISSIHFKDITGTASALGNPIVNVNCSIESPCSDITFSGIDITKASNTTDNVCVYLEGSDEVSECSS.

Positions 1–26 are cleaved as a signal peptide; sequence MVRFISFTSPIAALLLLSFGVKHAST. N-linked (GlcNAc...) asparagine glycosylation is found at asparagine 143, asparagine 161, asparagine 164, and asparagine 180. 4 PbH1 repeats span residues 165–195, 196–217, 219–241, and 249–270; these read STNL…DLYH, SSGI…AIKE, VEKV…GSLG, and VKHV…RVKT. Aspartate 210 serves as the catalytic Proton donor. Cysteines 212 and 229 form a disulfide. The N-linked (GlcNAc...) asparagine glycan is linked to asparagine 226. The active site involves histidine 233. N-linked (GlcNAc...) asparagine glycans are attached at residues asparagine 256, asparagine 319, and asparagine 343. Residues cysteine 344 and cysteine 350 are joined by a disulfide bond. The PbH1 5 repeat unit spans residues 350–376; sequence CSDITFSGIDITKASNTTDNVCVYLEG. N-linked (GlcNAc...) asparagine glycosylation is present at asparagine 365.

The protein belongs to the glycosyl hydrolase 28 family. In terms of processing, N-glycosylated.

The protein localises to the secreted. The catalysed reaction is [(1-&gt;4)-alpha-D-galacturonosyl](n) + H2O = alpha-D-galacturonate + [(1-&gt;4)-alpha-D-galacturonosyl](n-1). Functionally, specific in hydrolyzing the terminal glycosidic bond of polygalacturonic acid and oligogalacturonates. This Rhizopus delemar (strain RA 99-880 / ATCC MYA-4621 / FGSC 9543 / NRRL 43880) (Mucormycosis agent) protein is Exopolygalacturonase rpg15.